Reading from the N-terminus, the 216-residue chain is Probable transaldolase (216 aa).

Residue Lys-83 is the Schiff-base intermediate with substrate of the active site.

The protein belongs to the transaldolase family. Type 3B subfamily.

The protein resides in the cytoplasm. It carries out the reaction D-sedoheptulose 7-phosphate + D-glyceraldehyde 3-phosphate = D-erythrose 4-phosphate + beta-D-fructose 6-phosphate. Its pathway is carbohydrate degradation; pentose phosphate pathway; D-glyceraldehyde 3-phosphate and beta-D-fructose 6-phosphate from D-ribose 5-phosphate and D-xylulose 5-phosphate (non-oxidative stage): step 2/3. Its function is as follows. Transaldolase is important for the balance of metabolites in the pentose-phosphate pathway. The polypeptide is Probable transaldolase (Hyphomonas neptunium (strain ATCC 15444)).